The sequence spans 95 residues: Large ribosomal subunit protein uL23 (95 aa).

This sequence belongs to the universal ribosomal protein uL23 family. As to quaternary structure, part of the 50S ribosomal subunit. Contacts protein L29, and trigger factor when it is bound to the ribosome.

In terms of biological role, one of the early assembly proteins it binds 23S rRNA. One of the proteins that surrounds the polypeptide exit tunnel on the outside of the ribosome. Forms the main docking site for trigger factor binding to the ribosome. The protein is Large ribosomal subunit protein uL23 of Desulfitobacterium hafniense (strain Y51).